The following is a 273-amino-acid chain: Dermonecrotic toxin (273 aa).

E20 and D22 together coordinate Mg(2+). The active-site Nucleophile is the H35. Cysteines 39 and 45 form a disulfide. D79 is a binding site for Mg(2+).

This sequence belongs to the arthropod phospholipase D family. Class I subfamily. Mg(2+) serves as cofactor. As to expression, expressed by the venom gland.

Its subcellular location is the secreted. It carries out the reaction an N-(acyl)-sphingosylphosphocholine = an N-(acyl)-sphingosyl-1,3-cyclic phosphate + choline. It catalyses the reaction an N-(acyl)-sphingosylphosphoethanolamine = an N-(acyl)-sphingosyl-1,3-cyclic phosphate + ethanolamine. The enzyme catalyses a 1-acyl-sn-glycero-3-phosphocholine = a 1-acyl-sn-glycero-2,3-cyclic phosphate + choline. The catalysed reaction is a 1-acyl-sn-glycero-3-phosphoethanolamine = a 1-acyl-sn-glycero-2,3-cyclic phosphate + ethanolamine. Its function is as follows. Dermonecrotic toxins cleave the phosphodiester linkage between the phosphate and headgroup of certain phospholipids (sphingolipid and lysolipid substrates), forming an alcohol (often choline) and a cyclic phosphate. This toxin acts on sphingomyelin (SM). It may also act on ceramide phosphoethanolamine (CPE), lysophosphatidylcholine (LPC) and lysophosphatidylethanolamine (LPE), but not on lysophosphatidylserine (LPS), and lysophosphatidylglycerol (LPG). It acts by transphosphatidylation, releasing exclusively cyclic phosphate products as second products. Induces dermonecrosis, hemolysis, increased vascular permeability, edema, inflammatory response, and platelet aggregation. This is Dermonecrotic toxin from Loxosceles laeta (South American recluse spider).